The following is a 517-amino-acid chain: ATP synthase subunit alpha (517 aa).

Residue 174 to 181 (GDRQTGKT) coordinates ATP.

This sequence belongs to the ATPase alpha/beta chains family. As to quaternary structure, F-type ATPases have 2 components, CF(1) - the catalytic core - and CF(0) - the membrane proton channel. CF(1) has five subunits: alpha(3), beta(3), gamma(1), delta(1), epsilon(1). CF(0) has three main subunits: a(1), b(2) and c(9-12). The alpha and beta chains form an alternating ring which encloses part of the gamma chain. CF(1) is attached to CF(0) by a central stalk formed by the gamma and epsilon chains, while a peripheral stalk is formed by the delta and b chains.

It is found in the cell inner membrane. The catalysed reaction is ATP + H2O + 4 H(+)(in) = ADP + phosphate + 5 H(+)(out). Its function is as follows. Produces ATP from ADP in the presence of a proton gradient across the membrane. The alpha chain is a regulatory subunit. The chain is ATP synthase subunit alpha from Variovorax paradoxus (strain S110).